A 619-amino-acid chain; its full sequence is 1-deoxy-D-xylulose-5-phosphate synthase (619 aa).

Residues histidine 74 and 115-117 (GHS) contribute to the thiamine diphosphate site. Aspartate 146 is a binding site for Mg(2+). Residues 147-148 (GA), asparagine 175, tyrosine 285, and glutamate 365 contribute to the thiamine diphosphate site. Mg(2+) is bound at residue asparagine 175.

This sequence belongs to the transketolase family. DXPS subfamily. In terms of assembly, homodimer. Mg(2+) is required as a cofactor. It depends on thiamine diphosphate as a cofactor.

It carries out the reaction D-glyceraldehyde 3-phosphate + pyruvate + H(+) = 1-deoxy-D-xylulose 5-phosphate + CO2. Its pathway is metabolic intermediate biosynthesis; 1-deoxy-D-xylulose 5-phosphate biosynthesis; 1-deoxy-D-xylulose 5-phosphate from D-glyceraldehyde 3-phosphate and pyruvate: step 1/1. Its function is as follows. Catalyzes the acyloin condensation reaction between C atoms 2 and 3 of pyruvate and glyceraldehyde 3-phosphate to yield 1-deoxy-D-xylulose-5-phosphate (DXP). The polypeptide is 1-deoxy-D-xylulose-5-phosphate synthase (Clostridium acetobutylicum (strain ATCC 824 / DSM 792 / JCM 1419 / IAM 19013 / LMG 5710 / NBRC 13948 / NRRL B-527 / VKM B-1787 / 2291 / W)).